We begin with the raw amino-acid sequence, 318 residues long: NADH-ubiquinone oxidoreductase chain 1 (318 aa).

9 consecutive transmembrane segments (helical) span residues 2 to 22 (FLTN…FLTL), 36 to 56 (GPNI…IKLF), 69 to 89 (LLFT…WIPL), 100 to 120 (LGML…LWSG), 130 to 152 (IGAL…ILLH), 171 to 191 (HIWL…STLA), 217 to 237 (AGPF…MNAL), 254 to 273 (LYST…FLWI), and 294 to 314 (LPLT…LTSI).

The protein belongs to the complex I subunit 1 family.

The protein resides in the mitochondrion inner membrane. The enzyme catalyses a ubiquinone + NADH + 5 H(+)(in) = a ubiquinol + NAD(+) + 4 H(+)(out). Its function is as follows. Core subunit of the mitochondrial membrane respiratory chain NADH dehydrogenase (Complex I) that is believed to belong to the minimal assembly required for catalysis. Complex I functions in the transfer of electrons from NADH to the respiratory chain. The immediate electron acceptor for the enzyme is believed to be ubiquinone. In Cyclopes didactylus (Silky anteater), this protein is NADH-ubiquinone oxidoreductase chain 1 (MT-ND1).